Reading from the N-terminus, the 99-residue chain is Large ribosomal subunit protein bL21 (99 aa).

Belongs to the bacterial ribosomal protein bL21 family. In terms of assembly, part of the 50S ribosomal subunit. Contacts protein L20.

Functionally, this protein binds to 23S rRNA in the presence of protein L20. This is Large ribosomal subunit protein bL21 from Anaplasma phagocytophilum (strain HZ).